Here is a 504-residue protein sequence, read N- to C-terminus: Anaerobic nitric oxide reductase transcription regulator NorR (504 aa).

The residue at position 57 (D57) is a 4-aspartylphosphate. In terms of domain architecture, Sigma-54 factor interaction spans 187–416 (MIGLSPGMMQ…LEHAIHRAVV (230 aa)). Residues 215-222 (GETGTGKE) and 278-287 (ADNGTLFLDE) contribute to the ATP site. A DNA-binding region (H-T-H motif) is located at residues 479-498 (WAACARALEMDVANLHRLAK).

Its pathway is nitrogen metabolism; nitric oxide reduction. Its function is as follows. Required for the expression of anaerobic nitric oxide (NO) reductase, acts as a transcriptional activator for at least the norVW operon. Activation also requires sigma-54. This Enterobacter sp. (strain 638) protein is Anaerobic nitric oxide reductase transcription regulator NorR.